Consider the following 380-residue polypeptide: Elongation factor Ts, mitochondrial (380 aa).

Belongs to the EF-Ts family.

Its subcellular location is the mitochondrion. In terms of biological role, associates with the EF-Tu.GDP complex and induces the exchange of GDP to GTP. It remains bound to the aminoacyl-tRNA.EF-Tu.GTP complex up to the GTP hydrolysis stage on the ribosome. The sequence is that of Elongation factor Ts, mitochondrial from Plasmodium chabaudi chabaudi.